The chain runs to 262 residues: Adenosine deaminase RL5 (262 aa).

Positions 36, 40, 68, 73, 75, 114, 118, 135, 172, 175, 234, and 237 each coordinate Cu cation.

This sequence belongs to the purine nucleoside phosphorylase YfiH/LACC1 family. As to quaternary structure, homodimer. The cofactor is Cu cation.

The catalysed reaction is adenosine + phosphate = alpha-D-ribose 1-phosphate + adenine. It catalyses the reaction S-methyl-5'-thioadenosine + phosphate = 5-(methylsulfanyl)-alpha-D-ribose 1-phosphate + adenine. It carries out the reaction inosine + phosphate = alpha-D-ribose 1-phosphate + hypoxanthine. The enzyme catalyses adenosine + H2O + H(+) = inosine + NH4(+). Its function is as follows. Purine nucleoside enzyme that catalyzes the phosphorolysis of adenosine and inosine nucleosides, yielding D-ribose 1-phosphate and the respective free bases, adenine and hypoxanthine. Also catalyzes the phosphorolysis of S-methyl-5'-thioadenosine into adenine and S-methyl-5-thio-alpha-D-ribose 1-phosphate. Also has adenosine deaminase activity. Also acts as a multicopper oxidase able to oxidize a wide variety of polyphenols and related compounds in vitro. Displays substrate preference as follows: syringaldazine &gt; 2,6-dimethoxyphenol &gt; veratryl alcohol &gt; guaiacol &gt; tetramethylbenzidine &gt; 4-methoxybenzyl alcohol &gt; 2,2'-azino-bis(3-ethylbenzthiazoline-6-sulfonic acid) (ABTS) &gt;&gt; phenol red &gt; 1-hydroxybenzotriazole. Cannot use 3,4-dimetoxybenzyl alcohol and violuric acid as substrates. As this enzyme is derived from a rumen microbial community, it may have a role in the digestion of complex plant materials such as ryegrass lignin. The chain is Adenosine deaminase RL5 from Unknown prokaryotic organism.